Reading from the N-terminus, the 752-residue chain is Photosystem I P700 chlorophyll a apoprotein A1 (752 aa).

The next 8 helical transmembrane spans lie at isoleucine 73–alanine 96, leucine 159–histidine 182, leucine 198–alanine 222, isoleucine 294–tyrosine 312, tryptophan 349–tyrosine 372, leucine 388–valine 414, alanine 436–histidine 458, and phenylalanine 533–leucine 551. [4Fe-4S] cluster contacts are provided by cysteine 575 and cysteine 584. 2 helical membrane passes run histidine 591–tryptophan 612 and leucine 666–phenylalanine 688. Histidine 677 is a chlorophyll a' binding site. Residues methionine 685 and tyrosine 693 each contribute to the chlorophyll a site. Tryptophan 694 is a phylloquinone binding site. A helical transmembrane segment spans residues alanine 726–alanine 746.

Belongs to the PsaA/PsaB family. As to quaternary structure, the PsaA/B heterodimer binds the P700 chlorophyll special pair and subsequent electron acceptors. PSI consists of a core antenna complex that captures photons, and an electron transfer chain that converts photonic excitation into a charge separation. The cyanobacterial PSI reaction center is composed of one copy each of PsaA,B,C,D,E,F,I,J,K,L,M and X, and forms trimeric complexes. PSI electron transfer chain: 5 chlorophyll a, 1 chlorophyll a', 2 phylloquinones and 3 4Fe-4S clusters. PSI core antenna: 90 chlorophyll a, 22 carotenoids, 3 phospholipids and 1 galactolipid. P700 is a chlorophyll a/chlorophyll a' dimer, A0 is one or more chlorophyll a, A1 is one or both phylloquinones and FX is a shared 4Fe-4S iron-sulfur center. serves as cofactor.

The protein localises to the cellular thylakoid membrane. The enzyme catalyses reduced [plastocyanin] + hnu + oxidized [2Fe-2S]-[ferredoxin] = oxidized [plastocyanin] + reduced [2Fe-2S]-[ferredoxin]. PsaA and PsaB bind P700, the primary electron donor of photosystem I (PSI), as well as the electron acceptors A0, A1 and FX. PSI is a plastocyanin/cytochrome c6-ferredoxin oxidoreductase, converting photonic excitation into a charge separation, which transfers an electron from the donor P700 chlorophyll pair to the spectroscopically characterized acceptors A0, A1, FX, FA and FB in turn. Oxidized P700 is reduced on the lumenal side of the thylakoid membrane by plastocyanin or cytochrome c6. The protein is Photosystem I P700 chlorophyll a apoprotein A1 of Nostoc sp. (strain PCC 7120 / SAG 25.82 / UTEX 2576).